A 388-amino-acid chain; its full sequence is tRNA(Ile)-lysidine synthase (388 aa).

Serine 51–serine 56 provides a ligand contact to ATP.

It belongs to the tRNA(Ile)-lysidine synthase family.

It localises to the cytoplasm. It catalyses the reaction cytidine(34) in tRNA(Ile2) + L-lysine + ATP = lysidine(34) in tRNA(Ile2) + AMP + diphosphate + H(+). Its function is as follows. Ligates lysine onto the cytidine present at position 34 of the AUA codon-specific tRNA(Ile) that contains the anticodon CAU, in an ATP-dependent manner. Cytidine is converted to lysidine, thus changing the amino acid specificity of the tRNA from methionine to isoleucine. This is tRNA(Ile)-lysidine synthase from Bifidobacterium longum subsp. infantis (strain ATCC 15697 / DSM 20088 / JCM 1222 / NCTC 11817 / S12).